The sequence spans 339 residues: 4-hydroxy-2-oxovalerate aldolase 3 (339 aa).

Positions 7 to 259 constitute a Pyruvate carboxyltransferase domain; that stretch reads IRVTDTSLRD…KTGIDFFAIA (253 aa). 15 to 16 provides a ligand contact to substrate; sequence RD. Mn(2+) is bound at residue Asp16. Residue His19 is the Proton acceptor of the active site. Ser169 and His198 together coordinate substrate. Residues His198 and His200 each contribute to the Mn(2+) site. Tyr289 is a substrate binding site.

It belongs to the 4-hydroxy-2-oxovalerate aldolase family.

It catalyses the reaction (S)-4-hydroxy-2-oxopentanoate = acetaldehyde + pyruvate. In Rhodococcus opacus (strain B4), this protein is 4-hydroxy-2-oxovalerate aldolase 3.